Here is an 86-residue protein sequence, read N- to C-terminus: Small ribosomal subunit protein bS16 (86 aa).

The protein belongs to the bacterial ribosomal protein bS16 family.

The sequence is that of Small ribosomal subunit protein bS16 from Acidithiobacillus ferrooxidans (strain ATCC 23270 / DSM 14882 / CIP 104768 / NCIMB 8455) (Ferrobacillus ferrooxidans (strain ATCC 23270)).